The primary structure comprises 501 residues: Putative zinc metalloprotease TM_0890 (501 aa).

A Zn(2+)-binding site is contributed by H17. Residue E18 is part of the active site. A Zn(2+)-binding site is contributed by H21. The next 4 helical transmembrane spans lie at 93-115 (FLIT…LPIT), 401-420 (VQTG…SAAS), 427-449 (VLTV…LPAL), and 474-496 (IIHF…LDIG). The PDZ domain occupies 96–180 (TLAGPLFSIL…LVIIRNGEKK (85 aa)).

It belongs to the peptidase M50B family. Requires Zn(2+) as cofactor.

It localises to the cell inner membrane. In Thermotoga maritima (strain ATCC 43589 / DSM 3109 / JCM 10099 / NBRC 100826 / MSB8), this protein is Putative zinc metalloprotease TM_0890.